A 117-amino-acid chain; its full sequence is Ig heavy chain V region G4 (117 aa).

Residues 1–19 (MTHWLCFTLALVAVRGVLS) form the signal peptide. The interval 20–49 (EIQLVESGGAIRKPGDSLRLSCKASGFTFS) is framework-1. A disulfide bridge links cysteine 41 with cysteine 115. The complementarity-determining-1 stretch occupies residues 50–54 (DTWMA). The interval 55-68 (WARQPPGKGLQWVG) is framework-2. The interval 69–85 (EINGNSETIRYAPEVKG) is complementarity-determining-2. The interval 86 to 117 (RLTISRDNTQNLLFLQISSLKPEDTATYYCAR) is framework-3.

The chain is Ig heavy chain V region G4 (G4) from Caiman crocodilus (Spectacled caiman).